A 141-amino-acid chain; its full sequence is MYKHILVAVDLSEESPILLKKAVGIAKRHDAKLSIIHVDVNFSDLYTGLIDVNMSSMQDRISTETQKALLDLAESVDYPISEKLSGSGDLGQVLSDAIEQYDVDLLVTGHHQDFWSKLMSSTRQVMNTIKIDMLVVPLRDE.

Belongs to the universal stress protein A family. Homodimer.

It localises to the cytoplasm. Functionally, required for resistance to DNA-damaging agents. This Haemophilus influenzae (strain ATCC 51907 / DSM 11121 / KW20 / Rd) protein is Universal stress protein A homolog (uspA).